Here is a 164-residue protein sequence, read N- to C-terminus: Zinc finger A20 and AN1 domain-containing stress-associated protein 1 (164 aa).

The A20-type zinc finger occupies Ala-16–Ser-50. Zn(2+) is bound by residues Cys-22, Cys-26, Cys-38, and Cys-41. The span at Ser-48–Pro-58 shows a compositional bias: low complexity. The disordered stretch occupies residues Ser-48–Pro-81. An AN1-type zinc finger spans residues Thr-99–Ala-145. Residues Cys-105, Cys-108, Cys-119, Cys-121, Cys-126, His-129, His-135, and Cys-137 each coordinate Zn(2+).

May be involved in environmental stress response. The sequence is that of Zinc finger A20 and AN1 domain-containing stress-associated protein 1 (SAP1) from Oryza sativa subsp. indica (Rice).